The following is a 257-amino-acid chain: tRNA (guanine-N(7)-)-methyltransferase (257 aa).

The interval 1-42 is disordered; sequence MTVVVSDHQNPRPPGDDAAPLGRTGNRDRPPGSFFGRRKGHR. E84, E109, D136, and D158 together coordinate S-adenosyl-L-methionine. The active site involves D158. 2 residues coordinate substrate: K162 and D194.

This sequence belongs to the class I-like SAM-binding methyltransferase superfamily. TrmB family.

The enzyme catalyses guanosine(46) in tRNA + S-adenosyl-L-methionine = N(7)-methylguanosine(46) in tRNA + S-adenosyl-L-homocysteine. It functions in the pathway tRNA modification; N(7)-methylguanine-tRNA biosynthesis. Catalyzes the formation of N(7)-methylguanine at position 46 (m7G46) in tRNA. The sequence is that of tRNA (guanine-N(7)-)-methyltransferase from Nitrobacter winogradskyi (strain ATCC 25391 / DSM 10237 / CIP 104748 / NCIMB 11846 / Nb-255).